The primary structure comprises 342 residues: S-adenosylmethionine:tRNA ribosyltransferase-isomerase (342 aa).

The protein belongs to the QueA family. As to quaternary structure, monomer.

The protein localises to the cytoplasm. The catalysed reaction is 7-aminomethyl-7-carbaguanosine(34) in tRNA + S-adenosyl-L-methionine = epoxyqueuosine(34) in tRNA + adenine + L-methionine + 2 H(+). It functions in the pathway tRNA modification; tRNA-queuosine biosynthesis. In terms of biological role, transfers and isomerizes the ribose moiety from AdoMet to the 7-aminomethyl group of 7-deazaguanine (preQ1-tRNA) to give epoxyqueuosine (oQ-tRNA). This Sulfurimonas denitrificans (strain ATCC 33889 / DSM 1251) (Thiomicrospira denitrificans (strain ATCC 33889 / DSM 1251)) protein is S-adenosylmethionine:tRNA ribosyltransferase-isomerase.